The primary structure comprises 352 residues: tRNA N6-adenosine threonylcarbamoyltransferase (352 aa).

Residues His117 and His121 each contribute to the Fe cation site. Residues 140–144 (LVSGG), Asp173, Gly186, and Asn287 contribute to the substrate site. Position 315 (Asp315) interacts with Fe cation.

Belongs to the KAE1 / TsaD family. Fe(2+) serves as cofactor.

It is found in the cytoplasm. The catalysed reaction is L-threonylcarbamoyladenylate + adenosine(37) in tRNA = N(6)-L-threonylcarbamoyladenosine(37) in tRNA + AMP + H(+). Functionally, required for the formation of a threonylcarbamoyl group on adenosine at position 37 (t(6)A37) in tRNAs that read codons beginning with adenine. Is involved in the transfer of the threonylcarbamoyl moiety of threonylcarbamoyl-AMP (TC-AMP) to the N6 group of A37, together with TsaE and TsaB. TsaD likely plays a direct catalytic role in this reaction. This is tRNA N6-adenosine threonylcarbamoyltransferase from Psychrobacter cryohalolentis (strain ATCC BAA-1226 / DSM 17306 / VKM B-2378 / K5).